The chain runs to 351 residues: Prostaglandin reductase 2 (351 aa).

Residue 99–100 (FY) participates in substrate binding. NADP(+)-binding positions include 165–168 (GACG), Lys192, Tyr208, Asn231, 253–259 (CGQISQY), 287–289 (FMV), and Asn337. 288–290 (MVL) is a binding site for substrate.

The protein belongs to the NADP-dependent oxidoreductase L4BD family. Monomer.

It localises to the cytoplasm. The enzyme catalyses 13,14-dihydro-15-oxo-prostaglandin E2 + NAD(+) = 15-oxoprostaglandin E2 + NADH + H(+). It catalyses the reaction 13,14-dihydro-15-oxo-prostaglandin E2 + NADP(+) = 15-oxoprostaglandin E2 + NADPH + H(+). The catalysed reaction is 13,14-dihydro-15-oxo-PGF2alpha + NADP(+) = 15-oxoprostaglandin F2alpha + NADPH + H(+). It carries out the reaction 13,14-dihydro-15-oxo-prostaglandin E1 + NADP(+) = 15-oxoprostaglandin E1 + NADPH + H(+). The enzyme catalyses 13,14-dihydro-15-oxo-prostaglandin F1alpha + NADP(+) = 15-oxoprostaglandin F1alpha + NADPH + H(+). In terms of biological role, functions as 15-oxo-prostaglandin 13-reductase and acts on 15-keto-PGE1, 15-keto-PGE2, 15-keto-PGE1-alpha and 15-keto-PGE2-alpha with highest activity towards 15-keto-PGE2. Overexpression represses transcriptional activity of PPARG and inhibits adipocyte differentiation. This is Prostaglandin reductase 2 from Rattus norvegicus (Rat).